A 40-amino-acid polypeptide reads, in one-letter code: Snaclec tokaracetin subunit alpha (40 aa).

Positions Asp-1–Val-40 constitute a C-type lectin domain. Cysteines 2 and 13 form a disulfide.

The protein belongs to the snaclec family. As to quaternary structure, heterodimer of subunits alpha and beta; disulfide-linked. As to expression, expressed by the venom gland.

It localises to the secreted. Functionally, platelet antagonist that specifically and reversibly binds to a site on platelet glycoprotein Ibalpha (GP1BA) close to or identical with the site for vWF binding. It inhibits the binding of vWF to platelets and vWF-dependent shear-induced platelet aggregation. The chain is Snaclec tokaracetin subunit alpha from Protobothrops tokarensis (Tokara habu).